We begin with the raw amino-acid sequence, 441 residues long: Ribosomal protein uS12 methylthiotransferase RimO (441 aa).

The MTTase N-terminal domain maps to 8–118; the sequence is PKIGFVSLGC…VLQHVHHYVP (111 aa). [4Fe-4S] cluster is bound by residues Cys17, Cys53, Cys82, Cys150, Cys154, and Cys157. Residues 136–373 enclose the Radical SAM core domain; sequence LTPRHYAYLK…MQLQQQISAE (238 aa). Residues 376–441 form the TRAM domain; that stretch reads QEKVGREILV…DEYDLWGSRV (66 aa).

Belongs to the methylthiotransferase family. RimO subfamily. [4Fe-4S] cluster is required as a cofactor.

The protein localises to the cytoplasm. It catalyses the reaction L-aspartate(89)-[ribosomal protein uS12]-hydrogen + (sulfur carrier)-SH + AH2 + 2 S-adenosyl-L-methionine = 3-methylsulfanyl-L-aspartate(89)-[ribosomal protein uS12]-hydrogen + (sulfur carrier)-H + 5'-deoxyadenosine + L-methionine + A + S-adenosyl-L-homocysteine + 2 H(+). In terms of biological role, catalyzes the methylthiolation of an aspartic acid residue of ribosomal protein uS12. The protein is Ribosomal protein uS12 methylthiotransferase RimO of Salmonella arizonae (strain ATCC BAA-731 / CDC346-86 / RSK2980).